The primary structure comprises 500 residues: NAD(P)H-quinone oxidoreductase chain 4, chloroplastic (500 aa).

The next 14 membrane-spanning stretches (helical) occupy residues 4-24 (FPWL…MLFL), 35-55 (YTIC…CYNF), 87-107 (IGTI…AFPV), 113-130 (FFHF…GSFS), 134-154 (LLLF…LLSM), 167-187 (FILY…GISL), 211-231 (ILFY…IPLH), 242-262 (HYST…YGLV), 272-292 (AHSM…IYAA), 305-325 (IAYS…SITD), 330-350 (GAIL…FLAG), 386-406 (LALP…GIIT), 416-436 (ILII…LLSM), and 462-482 (LFLS…PDFV).

The protein belongs to the complex I subunit 4 family.

The protein resides in the plastid. It localises to the chloroplast thylakoid membrane. It carries out the reaction a plastoquinone + NADH + (n+1) H(+)(in) = a plastoquinol + NAD(+) + n H(+)(out). It catalyses the reaction a plastoquinone + NADPH + (n+1) H(+)(in) = a plastoquinol + NADP(+) + n H(+)(out). The sequence is that of NAD(P)H-quinone oxidoreductase chain 4, chloroplastic from Arabis hirsuta (Hairy rock-cress).